The sequence spans 423 residues: Hypoxia responsive morphology factor B (423 aa).

Positions 46-69 match the Bipartite nuclear localization signal motif; sequence KRSKTRRPKKEYKLQYENTKAHRV. The RNA recognition motif (RRM)-like domain stretch occupies residues 157–187; that stretch reads TQNCWAYRAAYLNAVHTIFSEQICSAMEVSP. Residues 243 to 257 show a composition bias toward polar residues; it reads LSPQSGRGPEPSTQI. A disordered region spans residues 243-273; it reads LSPQSGRGPEPSTQIAEPGRHDSQSEQSTIS.

This sequence belongs to the hrmA family.

The protein resides in the nucleus. Its function is as follows. Probably modulates the generation of the hypoxia-typic morphotype (called H-MORPH) with altered biofilm architecture that leads to increased host inflammation, rapid disease progression, and mortality in a murine model of invasive aspergillosis. This Aspergillus fumigatus (strain CBS 144.89 / FGSC A1163 / CEA10) (Neosartorya fumigata) protein is Hypoxia responsive morphology factor B.